A 191-amino-acid polypeptide reads, in one-letter code: Casparian strip membrane protein 4 (191 aa).

Residues 1–27 (MKTGSVEAGEQASEDATPRRGKKLNRG) lie on the Cytoplasmic side of the membrane. Residues 28–48 (ILILDLVLRVFGAICTLGSAV) form a helical membrane-spanning segment. At 49 to 72 (AMGTTSQTLPSSSQFFRFRAKYND) the chain is on the extracellular side. The chain crosses the membrane as a helical span at residues 73–93 (LPMFMFFAIANSIVCAYLVLS). Residues 94–110 (LRLSIFHIIRSAGIITR) are Cytoplasmic-facing. A helical membrane pass occupies residues 111-131 (IILVTFDMVMLVLLTCGASAA). At 132 to 160 (TSIVYLAHKGNASANWLPFCVRFSHFCNR) the chain is on the extracellular side. Asn-142 carries an N-linked (GlcNAc...) asparagine glycan. A helical membrane pass occupies residues 161–181 (ISGSLIGSFFSIIIFMLLVIL). Over 182–191 (SAVSQFSICN) the chain is Cytoplasmic.

It belongs to the Casparian strip membrane proteins (CASP) family. In terms of assembly, homodimer and heterodimers.

It localises to the cell membrane. Regulates membrane-cell wall junctions and localized cell wall deposition. Required for establishment of the Casparian strip membrane domain (CSD) and the subsequent formation of Casparian strips, a cell wall modification of the root endodermis that determines an apoplastic barrier between the intraorganismal apoplasm and the extraorganismal apoplasm and prevents lateral diffusion. The polypeptide is Casparian strip membrane protein 4 (Ricinus communis (Castor bean)).